A 264-amino-acid polypeptide reads, in one-letter code: Aminoglycoside 3'-phosphotransferase (264 aa).

Catalysis depends on Asp-190, which acts as the Proton acceptor.

Belongs to the aminoglycoside phosphotransferase family.

It carries out the reaction kanamycin A + ATP = kanamycin 3'-phosphate + ADP + H(+). In terms of biological role, resistance to kanamycin and structurally-related aminoglycosides, including amikacin. This chain is Aminoglycoside 3'-phosphotransferase (aphA), found in Enterococcus faecalis (Streptococcus faecalis).